We begin with the raw amino-acid sequence, 77 residues long: Adipokinetic prohormone type 3 (77 aa).

The N-terminal stretch at Met1–Ala22 is a signal peptide. Gln23 carries the pyrrolidone carboxylic acid modification. Trp30 is subject to Tryptophan amide.

The protein belongs to the AKH/HRTH/RPCH family.

It is found in the secreted. In terms of biological role, this hormone, released from cells in the corpora cardiaca, causes release of diglycerides from the fat body and stimulation of muscles to use these diglycerides as an energy source during energy-demanding processes. This is Adipokinetic prohormone type 3 from Locusta migratoria (Migratory locust).